Reading from the N-terminus, the 442-residue chain is 23S rRNA (uracil(1939)-C(5))-methyltransferase RlmD (442 aa).

Residues 12–70 enclose the TRAM domain; that stretch reads SKQLSAKVTLEVTKLDHLGAGMAQHQGKIVFIPGALPNEKVTVQLTEQKKRHARAKLLK. 4 residues coordinate [4Fe-4S] cluster: Cys83, Cys89, Cys92, and Cys171. Positions 276, 305, 310, 326, 353, and 373 each coordinate S-adenosyl-L-methionine. The active-site Nucleophile is the Cys399.

The protein belongs to the class I-like SAM-binding methyltransferase superfamily. RNA M5U methyltransferase family. RlmD subfamily.

The enzyme catalyses uridine(1939) in 23S rRNA + S-adenosyl-L-methionine = 5-methyluridine(1939) in 23S rRNA + S-adenosyl-L-homocysteine + H(+). Catalyzes the formation of 5-methyl-uridine at position 1939 (m5U1939) in 23S rRNA. This is 23S rRNA (uracil(1939)-C(5))-methyltransferase RlmD from Shewanella sediminis (strain HAW-EB3).